The sequence spans 125 residues: Fluoride-specific ion channel FluC (125 aa).

The next 4 helical transmembrane spans lie at 1-21, 34-54, 72-92, and 101-121; these read MFATFGFIALFAVLGAWARYG, FPWATLSINVLGCFLMGFLFF, TGGLGAYTTFSTFSLETLVLF, and LLYMFTSLFLCVGAAFAGAWI. Gly76 and Thr79 together coordinate Na(+).

It belongs to the fluoride channel Fluc/FEX (TC 1.A.43) family.

The protein resides in the cell inner membrane. The enzyme catalyses fluoride(in) = fluoride(out). Its activity is regulated as follows. Na(+) is not transported, but it plays an essential structural role and its presence is essential for fluoride channel function. In terms of biological role, fluoride-specific ion channel. Important for reducing fluoride concentration in the cell, thus reducing its toxicity. This is Fluoride-specific ion channel FluC from Acidithiobacillus ferrooxidans (strain ATCC 23270 / DSM 14882 / CIP 104768 / NCIMB 8455) (Ferrobacillus ferrooxidans (strain ATCC 23270)).